The sequence spans 142 residues: Large ribosomal subunit protein uL11 (142 aa).

The protein belongs to the universal ribosomal protein uL11 family. Part of the ribosomal stalk of the 50S ribosomal subunit. Interacts with L10 and the large rRNA to form the base of the stalk. L10 forms an elongated spine to which L12 dimers bind in a sequential fashion forming a multimeric L10(L12)X complex. Post-translationally, one or more lysine residues are methylated.

In terms of biological role, forms part of the ribosomal stalk which helps the ribosome interact with GTP-bound translation factors. The protein is Large ribosomal subunit protein uL11 of Rhodopseudomonas palustris (strain BisA53).